Here is a 149-residue protein sequence, read N- to C-terminus: Protein-export protein SecB (149 aa).

The protein belongs to the SecB family. In terms of assembly, homotetramer, a dimer of dimers. One homotetramer interacts with 1 SecA dimer.

It is found in the cytoplasm. Functionally, one of the proteins required for the normal export of preproteins out of the cell cytoplasm. It is a molecular chaperone that binds to a subset of precursor proteins, maintaining them in a translocation-competent state. It also specifically binds to its receptor SecA. This chain is Protein-export protein SecB, found in Hydrogenovibrio crunogenus (strain DSM 25203 / XCL-2) (Thiomicrospira crunogena).